The primary structure comprises 443 residues: Xaa-Pro dipeptidase (443 aa).

5 residues coordinate Mn(2+): aspartate 246, aspartate 257, histidine 339, glutamate 384, and glutamate 423.

Belongs to the peptidase M24B family. Bacterial-type prolidase subfamily. It depends on Mn(2+) as a cofactor.

It catalyses the reaction Xaa-L-Pro dipeptide + H2O = an L-alpha-amino acid + L-proline. In terms of biological role, splits dipeptides with a prolyl residue in the C-terminal position. This chain is Xaa-Pro dipeptidase, found in Escherichia coli O7:K1 (strain IAI39 / ExPEC).